The sequence spans 96 residues: UPF0235 protein VV1_1522 (96 aa).

The protein belongs to the UPF0235 family.

The chain is UPF0235 protein VV1_1522 from Vibrio vulnificus (strain CMCP6).